The sequence spans 84 residues: Protein myomixer (84 aa).

At 1–4 (MPTP) the chain is on the cytoplasmic side. Residues 5 to 25 (LLPLLLRLLLSCLLLPAARLA) traverse the membrane as a helical segment. Topologically, residues 26-84 (RQYLLPLLRRLARRLGSQDMREALLGCLLFILSQRHSPDAGEASRVDRLERRERLGPQK) are extracellular. Residues 48-57 (ALLGCLLFIL) carry the AxLyCxL motif. The segment at 62–84 (SPDAGEASRVDRLERRERLGPQK) is disordered.

It belongs to the MYMX family. As to quaternary structure, interacts with MYMK.

The protein localises to the cell membrane. Its function is as follows. Myoblast-specific protein that mediates myoblast fusion, an essential step for the formation of multi-nucleated muscle fibers. Involved in membrane fusion downstream of the lipid mixing step mediated by MYMK. Acts by generating membrane stresses via its extracellular C-terminus, leading to drive fusion pore formation. Acts independently of MYMK. Involved in skeletal muscle regeneration in response to injury by mediating the fusion of satellite cells, a population of muscle stem cells, with injured myofibers. The polypeptide is Protein myomixer (Homo sapiens (Human)).